The following is a 194-amino-acid chain: Leucyl/phenylalanyl-tRNA--protein transferase (194 aa).

The protein belongs to the L/F-transferase family.

The protein localises to the cytoplasm. It catalyses the reaction N-terminal L-lysyl-[protein] + L-leucyl-tRNA(Leu) = N-terminal L-leucyl-L-lysyl-[protein] + tRNA(Leu) + H(+). The enzyme catalyses N-terminal L-arginyl-[protein] + L-leucyl-tRNA(Leu) = N-terminal L-leucyl-L-arginyl-[protein] + tRNA(Leu) + H(+). It carries out the reaction L-phenylalanyl-tRNA(Phe) + an N-terminal L-alpha-aminoacyl-[protein] = an N-terminal L-phenylalanyl-L-alpha-aminoacyl-[protein] + tRNA(Phe). Functionally, functions in the N-end rule pathway of protein degradation where it conjugates Leu, Phe and, less efficiently, Met from aminoacyl-tRNAs to the N-termini of proteins containing an N-terminal arginine or lysine. The sequence is that of Leucyl/phenylalanyl-tRNA--protein transferase from Chlorobium limicola (strain DSM 245 / NBRC 103803 / 6330).